The sequence spans 512 residues: Maturase K (512 aa).

The protein belongs to the intron maturase 2 family. MatK subfamily.

The protein resides in the plastid. It is found in the chloroplast. Functionally, usually encoded in the trnK tRNA gene intron. Probably assists in splicing its own and other chloroplast group II introns. The protein is Maturase K of Lilium canadense (Canada lily).